The sequence spans 203 residues: Urease accessory protein UreE (203 aa).

A disordered region spans residues 170–203 (EHHGHSHSHSHSHSHDHDHQHGPSCSHGHHHGHR).

This sequence belongs to the UreE family.

Its subcellular location is the cytoplasm. In terms of biological role, involved in urease metallocenter assembly. Binds nickel. Probably functions as a nickel donor during metallocenter assembly. This Burkholderia mallei (strain SAVP1) protein is Urease accessory protein UreE.